The following is a 249-amino-acid chain: AA9 family lytic polysaccharide monooxygenase cel61B (249 aa).

The signal sequence occupies residues Met1–Gly19. Cu(2+) is bound at residue His20. Asn25 carries N-linked (GlcNAc...) asparagine glycosylation. Cystine bridges form between Cys78-Cys198 and Cys120-Cys124. Cu(2+) is bound at residue His108. Positions 184 and 193 each coordinate O2. Cu(2+) is bound at residue Tyr195.

Belongs to the polysaccharide monooxygenase AA9 family. Monomer. Cu(2+) serves as cofactor.

Its subcellular location is the secreted. The catalysed reaction is [(1-&gt;4)-beta-D-glucosyl]n+m + reduced acceptor + O2 = 4-dehydro-beta-D-glucosyl-[(1-&gt;4)-beta-D-glucosyl]n-1 + [(1-&gt;4)-beta-D-glucosyl]m + acceptor + H2O.. Lytic polysaccharide monooxygenase (LPMO) that depolymerizes crystalline and amorphous polysaccharides via the oxidation of scissile alpha- or beta-(1-4)-glycosidic bonds, yielding C1 or C4 oxidation products. Catalysis by LPMOs requires the reduction of the active-site copper from Cu(II) to Cu(I) by a reducing agent and H(2)O(2) or O(2) as a cosubstrate. This chain is AA9 family lytic polysaccharide monooxygenase cel61B, found in Hypocrea jecorina (strain QM6a) (Trichoderma reesei).